Consider the following 314-residue polypeptide: Oxidoreductase NAD-binding domain-containing protein 1 (314 aa).

Residues 1-18 (MALVAGSAAYQVLRGVTG) form the signal peptide. In terms of domain architecture, FAD-binding FR-type spans 63–166 (EIISPAKVCE…VGGEFCFDPQ (104 aa)). Residue 180–185 (GVGINP) participates in NAD(+) binding.

The protein is Oxidoreductase NAD-binding domain-containing protein 1 (oxnad1) of Xenopus tropicalis (Western clawed frog).